Consider the following 353-residue polypeptide: Photosystem II protein D1 (353 aa).

Threonine 2 carries the N-acetylthreonine modification. Threonine 2 carries the phosphothreonine modification. Helical transmembrane passes span 29-46 (YVGWFGVIMIPTLLTAVS), 118-133 (HFFLGICCYMGREWEL), and 142-156 (WIAVAYSAPVAAATA). Position 118 (histidine 118) interacts with chlorophyll a. A pheophytin a-binding site is contributed by tyrosine 126. [CaMn4O5] cluster contacts are provided by aspartate 170 and glutamate 189. Residues 197–218 (FHMLGVAGVFGGSLFSAMHGSL) form a helical membrane-spanning segment. Chlorophyll a is bound at residue histidine 198. Residues histidine 215 and 264–265 (SF) contribute to the a quinone site. A Fe cation-binding site is contributed by histidine 215. Histidine 272 is a binding site for Fe cation. Residues 274–288 (FLAAWPVVGIWFTAL) traverse the membrane as a helical segment. [CaMn4O5] cluster is bound by residues histidine 332, glutamate 333, aspartate 342, and alanine 344. The propeptide occupies 345–353 (SVEAPSING).

Belongs to the reaction center PufL/M/PsbA/D family. In terms of assembly, PSII is composed of 1 copy each of membrane proteins PsbA, PsbB, PsbC, PsbD, PsbE, PsbF, PsbH, PsbI, PsbJ, PsbK, PsbL, PsbM, PsbT, PsbX, PsbY, PsbZ, Psb30/Ycf12, at least 3 peripheral proteins of the oxygen-evolving complex and a large number of cofactors. It forms dimeric complexes. It depends on The D1/D2 heterodimer binds P680, chlorophylls that are the primary electron donor of PSII, and subsequent electron acceptors. It shares a non-heme iron and each subunit binds pheophytin, quinone, additional chlorophylls, carotenoids and lipids. D1 provides most of the ligands for the Mn4-Ca-O5 cluster of the oxygen-evolving complex (OEC). There is also a Cl(-1) ion associated with D1 and D2, which is required for oxygen evolution. The PSII complex binds additional chlorophylls, carotenoids and specific lipids. as a cofactor. In terms of processing, tyr-161 forms a radical intermediate that is referred to as redox-active TyrZ, YZ or Y-Z. C-terminally processed by CTPA; processing is essential to allow assembly of the oxygen-evolving complex and thus photosynthetic growth.

It localises to the plastid. The protein localises to the chloroplast thylakoid membrane. The catalysed reaction is 2 a plastoquinone + 4 hnu + 2 H2O = 2 a plastoquinol + O2. Photosystem II (PSII) is a light-driven water:plastoquinone oxidoreductase that uses light energy to abstract electrons from H(2)O, generating O(2) and a proton gradient subsequently used for ATP formation. It consists of a core antenna complex that captures photons, and an electron transfer chain that converts photonic excitation into a charge separation. The D1/D2 (PsbA/PsbD) reaction center heterodimer binds P680, the primary electron donor of PSII as well as several subsequent electron acceptors. The polypeptide is Photosystem II protein D1 (Tupiella akineta (Green alga)).